A 211-amino-acid chain; its full sequence is Proteasome subunit beta 1 (211 aa).

Positions 1–17 (MVIMGNELQLENKILKG) are cleaved as a propeptide — removed in mature form; by autocatalysis. T18 (nucleophile) is an active-site residue.

This sequence belongs to the peptidase T1B family. The 20S proteasome core is composed of 14 alpha and 14 beta subunits that assemble into four stacked heptameric rings, resulting in a barrel-shaped structure. The two inner rings, each composed of seven catalytic beta subunits, are sandwiched by two outer rings, each composed of seven alpha subunits. The catalytic chamber with the active sites is on the inside of the barrel. Has a gated structure, the ends of the cylinder being occluded by the N-termini of the alpha-subunits. Is capped at one or both ends by the proteasome regulatory ATPase, PAN.

It is found in the cytoplasm. The catalysed reaction is Cleavage of peptide bonds with very broad specificity.. With respect to regulation, the formation of the proteasomal ATPase PAN-20S proteasome complex, via the docking of the C-termini of PAN into the intersubunit pockets in the alpha-rings, triggers opening of the gate for substrate entry. Interconversion between the open-gate and close-gate conformations leads to a dynamic regulation of the 20S proteasome proteolysis activity. Functionally, component of the proteasome core, a large protease complex with broad specificity involved in protein degradation. The polypeptide is Proteasome subunit beta 1 (Saccharolobus islandicus (strain M.16.27) (Sulfolobus islandicus)).